A 412-amino-acid chain; its full sequence is Peptidase T (412 aa).

H78 contacts Zn(2+). Residue D80 is part of the active site. D140 is a binding site for Zn(2+). The active-site Proton acceptor is the E173. Zn(2+)-binding residues include E174, D196, and H379.

This sequence belongs to the peptidase M20B family. Zn(2+) serves as cofactor.

It localises to the cytoplasm. The catalysed reaction is Release of the N-terminal residue from a tripeptide.. Functionally, cleaves the N-terminal amino acid of tripeptides. In Edwardsiella ictaluri (strain 93-146), this protein is Peptidase T.